A 303-amino-acid chain; its full sequence is Taste receptor type 2 member 13 (303 aa).

Residues 1–7 (MKSALPS) lie on the Extracellular side of the membrane. The helical transmembrane segment at 8–28 (IFTLVIIAEFIIGNLSNGFIV) threads the bilayer. Over 29–55 (LINCIDWVSKRELSSVDKLLIILAISR) the chain is Cytoplasmic. The chain crosses the membrane as a helical span at residues 56–76 (IGLIWEILVSWFLALHYLAIF). Residues 77 to 85 (VSGTGLRIM) are Extracellular-facing. A helical membrane pass occupies residues 86–106 (IFSWIVSNHFNLWLATILSIF). Topologically, residues 107 to 128 (YLLKIASFSSPAFLYLKWRVNK) are cytoplasmic. Residues 129-149 (VILLILLGTLVFLFLNLIQIN) form a helical membrane-spanning segment. Topologically, residues 150–184 (MHIKDWLDRYERNTTWNFSMSDFETFSVSVKFTMT) are extracellular. Asn-162 and Asn-166 each carry an N-linked (GlcNAc...) asparagine glycan. A helical transmembrane segment spans residues 185–205 (MFSLTPFTVAFISFLLLIFSL). Residues 206-232 (QKHLQKMQLNYKGHRDPKTKVHTNALK) lie on the Cytoplasmic side of the membrane. Residues 233-253 (IVISFLLFYASFFLCVLXSWI) form a helical membrane-spanning segment. Topologically, residues 254-261 (SELYQNTV) are extracellular. A helical transmembrane segment spans residues 262 to 282 (IYMLCETIGVFYPSSHSFLLI). Topologically, residues 283 to 303 (LGNAKLRQAFLLVAAKVWAKR) are cytoplasmic.

It belongs to the G-protein coupled receptor T2R family.

The protein resides in the membrane. Receptor that may play a role in the perception of bitterness and is gustducin-linked. May play a role in sensing the chemical composition of the gastrointestinal content. The activity of this receptor may stimulate alpha gustducin, mediate PLC-beta-2 activation and lead to the gating of TRPM5. This chain is Taste receptor type 2 member 13 (TAS2R13), found in Gorilla gorilla gorilla (Western lowland gorilla).